A 249-amino-acid chain; its full sequence is Ubiquinone biosynthesis O-methyltransferase (249 aa).

Positions 44, 75, 96, and 138 each coordinate S-adenosyl-L-methionine.

Belongs to the methyltransferase superfamily. UbiG/COQ3 family.

The enzyme catalyses a 3-demethylubiquinol + S-adenosyl-L-methionine = a ubiquinol + S-adenosyl-L-homocysteine + H(+). It carries out the reaction a 3-(all-trans-polyprenyl)benzene-1,2-diol + S-adenosyl-L-methionine = a 2-methoxy-6-(all-trans-polyprenyl)phenol + S-adenosyl-L-homocysteine + H(+). The protein operates within cofactor biosynthesis; ubiquinone biosynthesis. Functionally, O-methyltransferase that catalyzes the 2 O-methylation steps in the ubiquinone biosynthetic pathway. The protein is Ubiquinone biosynthesis O-methyltransferase of Paramagnetospirillum magneticum (strain ATCC 700264 / AMB-1) (Magnetospirillum magneticum).